The sequence spans 248 residues: NADH dehydrogenase [ubiquinone] flavoprotein 2, mitochondrial (248 aa).

A mitochondrion-targeting transit peptide spans 1-31; that stretch reads MFSLALRARASGLTAQWGRHARNLHKTAVQN. The [2Fe-2S] cluster site is built by Cys134, Cys139, Cys175, and Cys179. At Tyr192 the chain carries Phosphotyrosine; by SRC. A disordered region spans residues 229–248; it reads GLTSLTEPPKGPGFGVQAGL.

Belongs to the complex I 24 kDa subunit family. As to quaternary structure, core subunit of respiratory chain NADH dehydrogenase (Complex I) which is composed of 45 different subunits. This is a component of the flavoprotein-sulfur (FP) fragment of the enzyme. The cofactor is [2Fe-2S] cluster.

The protein localises to the mitochondrion inner membrane. It catalyses the reaction a ubiquinone + NADH + 5 H(+)(in) = a ubiquinol + NAD(+) + 4 H(+)(out). Core subunit of the mitochondrial membrane respiratory chain NADH dehydrogenase (Complex I) which catalyzes electron transfer from NADH through the respiratory chain, using ubiquinone as an electron acceptor. Parts of the peripheral arm of the enzyme, where the electrons from NADH are accepted by flavin mononucleotide (FMN) and then passed along a chain of iron-sulfur clusters by electron tunnelling to the final acceptor ubiquinone. Contains one iron-sulfur cluster. The polypeptide is NADH dehydrogenase [ubiquinone] flavoprotein 2, mitochondrial (Rattus norvegicus (Rat)).